We begin with the raw amino-acid sequence, 468 residues long: Cell division protein FtsA (468 aa).

Positions 416–468 are disordered; that stretch reads NKKDTHENEVESSDEEIYQSEDNHQEHKQNHEHVQDKDKEESKFKKLMKSLFE. Acidic residues predominate over residues 425–434; that stretch reads VESSDEEIYQ. The span at 436–459 shows a compositional bias: basic and acidic residues; it reads EDNHQEHKQNHEHVQDKDKEESKF.

The protein belongs to the FtsA/MreB family. As to quaternary structure, self-interacts. Interacts with FtsZ.

The protein localises to the cell membrane. Functionally, cell division protein that is involved in the assembly of the Z ring. May serve as a membrane anchor for the Z ring. The chain is Cell division protein FtsA from Staphylococcus aureus (strain MRSA252).